The primary structure comprises 125 residues: Small ribosomal subunit protein eS8 (125 aa).

Residues 1–20 (MLWQGESIRKVTGGRRRPAQ) form a disordered region.

This sequence belongs to the eukaryotic ribosomal protein eS8 family. Part of the 30S ribosomal subunit.

The protein is Small ribosomal subunit protein eS8 of Methanoregula boonei (strain DSM 21154 / JCM 14090 / 6A8).